Consider the following 508-residue polypeptide: Putative POTE ankyrin domain family member M (508 aa).

ANK repeat units follow at residues 172 to 201 (QKRTALHLASANGNSEVVKLLLDRRCQLNI), 205 to 234 (KKRTALTKAVQCQEDECALMLLEHGTDPNI), 238 to 267 (YGNTALHYAIYNEDKLMAKALLLYGADIES), 271 to 300 (HGLTPLLLGVHEQKQQVVKFLIKKKANLNA), and 304 to 333 (YGRTVLILAVCCGSASIVSLLLEQNIDVSS). Positions 369–487 (SSENSNPEQD…KQLSEEQNTG (119 aa)) are disordered. 2 stretches are compositionally biased toward basic and acidic residues: residues 377–392 (QDLKLTSEEESQRLKG) and 406–421 (EINKGGDRKVEEEMKK). A compositionally biased stretch (polar residues) spans 476–487 (TQKQLSEEQNTG).

The protein belongs to the POTE family.

The sequence is that of Putative POTE ankyrin domain family member M (POTEM) from Homo sapiens (Human).